The chain runs to 413 residues: Putative tRNA pseudouridine synthase C16C4.06c (413 aa).

Residue D96 is the Nucleophile of the active site. Y154 is a substrate binding site.

The protein belongs to the tRNA pseudouridine synthase TruA family.

It is found in the cytoplasm. It localises to the nucleus. It carries out the reaction a uridine in tRNA = a pseudouridine in tRNA. This Schizosaccharomyces pombe (strain 972 / ATCC 24843) (Fission yeast) protein is Putative tRNA pseudouridine synthase C16C4.06c.